Consider the following 125-residue polypeptide: Flagellar protein FliT (125 aa).

The tract at residues 1-50 is required for homodimerization; sequence MDNKMDLLSAYQRILSLSEQMLNLAKNEKWDELVDMEITYLKAVEVISHS. Residues 60-98 form a fliD binding region; the sequence is LQQKMTNILQIILDNENEIKKLLQKRLDELSKLIKQASQ.

It belongs to the FliT family. Homodimer. Interacts with FliD and FlhC.

The protein resides in the cytoplasm. The protein localises to the cytosol. In terms of biological role, dual-function protein that regulates the transcription of class 2 flagellar operons and that also acts as an export chaperone for the filament-capping protein FliD. As a transcriptional regulator, acts as an anti-FlhDC factor; it directly binds FlhC, thus inhibiting the binding of the FlhC/FlhD complex to class 2 promoters, resulting in decreased expression of class 2 flagellar operons. As a chaperone, effects FliD transition to the membrane by preventing its premature polymerization, and by directing it to the export apparatus. The sequence is that of Flagellar protein FliT from Photorhabdus laumondii subsp. laumondii (strain DSM 15139 / CIP 105565 / TT01) (Photorhabdus luminescens subsp. laumondii).